A 775-amino-acid polypeptide reads, in one-letter code: Lon protease (775 aa).

The 202-residue stretch at 6–207 (LPLMALRDIV…TIINILTSNI (202 aa)) folds into the Lon N-terminal domain. 356–363 (GPPGVGKT) provides a ligand contact to ATP. Residues 592 to 773 (NDQIGSTTGL…DQVLEHALTK (182 aa)) form the Lon proteolytic domain. Residues Ser-679 and Lys-722 contribute to the active site.

Belongs to the peptidase S16 family. As to quaternary structure, homohexamer. Organized in a ring with a central cavity.

The protein localises to the cytoplasm. It catalyses the reaction Hydrolysis of proteins in presence of ATP.. Functionally, ATP-dependent serine protease that mediates the selective degradation of mutant and abnormal proteins as well as certain short-lived regulatory proteins. Required for cellular homeostasis and for survival from DNA damage and developmental changes induced by stress. Degrades polypeptides processively to yield small peptide fragments that are 5 to 10 amino acids long. Binds to DNA in a double-stranded, site-specific manner. The chain is Lon protease from Rickettsia bellii (strain RML369-C).